The following is a 347-amino-acid chain: Holliday junction branch migration complex subunit RuvB (347 aa).

The interval 1-183 is large ATPase domain (RuvB-L); that stretch reads MTPPSRIVTP…FGIPIRLNFY (183 aa). ATP is bound by residues Leu-22, Arg-23, Gly-64, Lys-67, Thr-68, Thr-69, 130–132, Arg-173, Tyr-183, and Arg-220; that span reads EDF. Thr-68 is a binding site for Mg(2+). Positions 184–254 are small ATPAse domain (RuvB-S); it reads TVEELEGIVS…IADHALSALE (71 aa). The interval 257–347 is head domain (RuvB-H); it reads AAGLDAMDRR…QFGLFGGDEE (91 aa). DNA is bound by residues Arg-293, Arg-312, and Arg-317.

It belongs to the RuvB family. Homohexamer. Forms an RuvA(8)-RuvB(12)-Holliday junction (HJ) complex. HJ DNA is sandwiched between 2 RuvA tetramers; dsDNA enters through RuvA and exits via RuvB. An RuvB hexamer assembles on each DNA strand where it exits the tetramer. Each RuvB hexamer is contacted by two RuvA subunits (via domain III) on 2 adjacent RuvB subunits; this complex drives branch migration. In the full resolvosome a probable DNA-RuvA(4)-RuvB(12)-RuvC(2) complex forms which resolves the HJ.

It localises to the cytoplasm. It carries out the reaction ATP + H2O = ADP + phosphate + H(+). Functionally, the RuvA-RuvB-RuvC complex processes Holliday junction (HJ) DNA during genetic recombination and DNA repair, while the RuvA-RuvB complex plays an important role in the rescue of blocked DNA replication forks via replication fork reversal (RFR). RuvA specifically binds to HJ cruciform DNA, conferring on it an open structure. The RuvB hexamer acts as an ATP-dependent pump, pulling dsDNA into and through the RuvAB complex. RuvB forms 2 homohexamers on either side of HJ DNA bound by 1 or 2 RuvA tetramers; 4 subunits per hexamer contact DNA at a time. Coordinated motions by a converter formed by DNA-disengaged RuvB subunits stimulates ATP hydrolysis and nucleotide exchange. Immobilization of the converter enables RuvB to convert the ATP-contained energy into a lever motion, pulling 2 nucleotides of DNA out of the RuvA tetramer per ATP hydrolyzed, thus driving DNA branch migration. The RuvB motors rotate together with the DNA substrate, which together with the progressing nucleotide cycle form the mechanistic basis for DNA recombination by continuous HJ branch migration. Branch migration allows RuvC to scan DNA until it finds its consensus sequence, where it cleaves and resolves cruciform DNA. This Rhodopseudomonas palustris (strain BisA53) protein is Holliday junction branch migration complex subunit RuvB.